A 388-amino-acid chain; its full sequence is Granulocyte-macrophage colony-stimulating factor receptor subunit alpha (388 aa).

Residues 1 to 29 (MTSSHAMNITPLAQLALLFSTLLLPGTQA) form the signal peptide. The Extracellular segment spans residues 30–327 (LLAPTTPDAG…PLEAEDTRVP (298 aa)). N-linked (GlcNAc...) asparagine glycosylation is found at N43, N63, N106, N132, N165, and N237. The Fibronectin type-III domain occupies 228–324 (PPRDVTASCN…PAHPLEAEDT (97 aa)). The WSXWS motif motif lies at 310 to 314 (WGEWS). A helical transmembrane segment spans residues 328 to 348 (GALLYAVTACAVLLCALALGV). Residues 349–388 (TCRRFEVTRRLFPPIPGIRDKVSDDVRVNPETLRKDLLQP) lie on the Cytoplasmic side of the membrane. A Box 1 motif motif is present at residues 359 to 367 (LFPPIPGIR).

Belongs to the type I cytokine receptor family. Type 5 subfamily. As to quaternary structure, heterodimer of an alpha and a beta subunit. The beta subunit is common to the IL3, IL5 and GM-CSF receptors. The signaling GM-CSF receptor complex is a dodecamer of two head-to-head hexamers of two alpha, two beta, and two ligand subunits.

The protein resides in the membrane. Its function is as follows. Low affinity receptor for granulocyte-macrophage colony-stimulating factor. Transduces a signal that results in the proliferation, differentiation, and functional activation of hematopoietic cells. This is Granulocyte-macrophage colony-stimulating factor receptor subunit alpha (Csf2ra) from Mus musculus (Mouse).